The primary structure comprises 211 residues: Troponin I, cardiac muscle (211 aa).

The tract at residues 1–25 (MADESSDAAGEPQPAPAPVRRRSSA) is disordered. Ala-2 carries the post-translational modification N-acetylalanine. Ser-5 and Ser-6 each carry phosphoserine. 2 positions are modified to phosphoserine; by PKA and PKD/PRKD1: Ser-23 and Ser-24. Tyr-27 carries the phosphotyrosine modification. Thr-32 is modified (phosphothreonine; by STK4/MST1). The involved in binding TNC stretch occupies residues 33–80 (EPHAKKKSKISASRKLQLKTLMLQIAKQEMEREAEERRGEKGRVLSTR). Ser-43 and Ser-45 each carry phosphoserine; by PKC/PRKCE. Position 52 is a phosphothreonine; by STK4/MST1 (Thr-52). Ser-78 carries the post-translational modification Phosphoserine. Phosphothreonine is present on Thr-79. A phosphothreonine; by STK4/MST1 mark is found at Thr-130 and Thr-144. Positions 130-151 (TQKIYDLRGKFKRPTLRRVRIS) are involved in binding TNC and actin. Phosphoserine; by PAK3 is present on Ser-151. Phosphoserine occurs at positions 167 and 200.

Belongs to the troponin I family. Interacts with TRIM63. Binds to actin and tropomyosin. Interacts with STK4/MST1. In terms of processing, phosphorylated at Ser-23 and Ser-24 by PRKD1; phosphorylation reduces myofilament calcium sensitivity. Phosphorylated preferentially at Thr-32. Phosphorylation by STK4/MST1 alters its binding affinity to TNNC1 (cardiac Tn-C) and TNNT2 (cardiac Tn-T). Phosphorylated at Ser-43 and Ser-45 by PRKCE; phosphorylation increases myocardium contractile dysfunction.

Its function is as follows. Troponin I is the inhibitory subunit of troponin, the thin filament regulatory complex which confers calcium-sensitivity to striated muscle actomyosin ATPase activity. The sequence is that of Troponin I, cardiac muscle (Tnni3) from Rattus norvegicus (Rat).